Consider the following 505-residue polypeptide: ATP synthase subunit beta (505 aa).

Positions 1–25 (MAKAATPKETAAVKKPAAPKKAATA) are disordered. Residue 183–190 (GGAGVGKT) participates in ATP binding.

Belongs to the ATPase alpha/beta chains family. F-type ATPases have 2 components, CF(1) - the catalytic core - and CF(0) - the membrane proton channel. CF(1) has five subunits: alpha(3), beta(3), gamma(1), delta(1), epsilon(1). CF(0) has three main subunits: a(1), b(2) and c(9-12). The alpha and beta chains form an alternating ring which encloses part of the gamma chain. CF(1) is attached to CF(0) by a central stalk formed by the gamma and epsilon chains, while a peripheral stalk is formed by the delta and b chains.

It localises to the cell inner membrane. It catalyses the reaction ATP + H2O + 4 H(+)(in) = ADP + phosphate + 5 H(+)(out). Its function is as follows. Produces ATP from ADP in the presence of a proton gradient across the membrane. The catalytic sites are hosted primarily by the beta subunits. The chain is ATP synthase subunit beta from Sinorhizobium fredii (strain NBRC 101917 / NGR234).